Here is an 87-residue protein sequence, read N- to C-terminus: Small ribosomal subunit protein uS15 (87 aa).

Belongs to the universal ribosomal protein uS15 family. As to quaternary structure, part of the 30S ribosomal subunit. Forms a bridge to the 50S subunit in the 70S ribosome, contacting the 23S rRNA.

In terms of biological role, one of the primary rRNA binding proteins, it binds directly to 16S rRNA where it helps nucleate assembly of the platform of the 30S subunit by binding and bridging several RNA helices of the 16S rRNA. Forms an intersubunit bridge (bridge B4) with the 23S rRNA of the 50S subunit in the ribosome. This Cutibacterium acnes (strain DSM 16379 / KPA171202) (Propionibacterium acnes) protein is Small ribosomal subunit protein uS15.